We begin with the raw amino-acid sequence, 360 residues long: DNA replication and repair protein RecF (360 aa).

Residue 30–37 (GHNGSGKT) participates in ATP binding.

Belongs to the RecF family.

It localises to the cytoplasm. The RecF protein is involved in DNA metabolism; it is required for DNA replication and normal SOS inducibility. RecF binds preferentially to single-stranded, linear DNA. It also seems to bind ATP. The chain is DNA replication and repair protein RecF from Actinobacillus pleuropneumoniae serotype 7 (strain AP76).